The primary structure comprises 797 residues: Speckle targeted PIP5K1A-regulated poly(A) polymerase (797 aa).

A Matrin-type zinc finger spans residues 14–44 (FHCNLCHVNIPNRPSLEDHVKGKKHLHLLRL). An RRM domain is found at 54–126 (NSVFVSGFKA…LKLRVKPREK (73 aa)). Residue Ser-205 participates in ATP binding. Residues Asp-216 and Asp-218 each coordinate Mg(2+). UTP-binding residues include Asp-216, Asp-218, Asn-319, Arg-341, Tyr-363, and His-495. Asn-319 lines the ATP pocket. In terms of domain architecture, PAP-associated spans 421 to 495 (DLCTLLFGFF…NVLDPFELNH (75 aa)). The segment at 544–787 (QSEAAASSQP…FLPKMAETIM (244 aa)) is KA1; binds the bulging loops of U6 snRNA but is dispensable for terminal uridylyltransferase activity. The segment at 611 to 659 (EETQSLDKTDKSGSEMEVNNNRSLEDTNIQVKGEAGKKRPLSVEEGPST) is disordered. Basic and acidic residues predominate over residues 615-624 (SLDKTDKSGS). Over residues 627–640 (EVNNNRSLEDTNIQ) the composition is skewed to polar residues.

The protein belongs to the DNA polymerase type-B-like family. As to quaternary structure, associates with the cleavage and polyadenylation specificity factor (CPSF) complex. Requires Mg(2+) as cofactor. Mn(2+) serves as cofactor.

The protein localises to the nucleus. It is found in the nucleolus. Its subcellular location is the nucleus speckle. The catalysed reaction is RNA(n) + UTP = RNA(n)-3'-uridine ribonucleotide + diphosphate. The enzyme catalyses RNA(n) + ATP = RNA(n)-3'-adenine ribonucleotide + diphosphate. Functionally, poly(A) polymerase that creates the 3'-poly(A) tail of specific pre-mRNAs. In addition to polyadenylation, it is also required for the 3'-end cleavage of pre-mRNAs: binds to the 3'UTR of targeted pre-mRNAs and promotes the recruitment and assembly of the CPSF complex on the 3'UTR of pre-mRNAs. In addition to adenylyltransferase activity, also has uridylyltransferase activity. However, the ATP ratio is higher than UTP in cells, suggesting that it functions primarily as a poly(A) polymerase. This Danio rerio (Zebrafish) protein is Speckle targeted PIP5K1A-regulated poly(A) polymerase (tut1).